The chain runs to 481 residues: MVASPIHSRGLDLPLPSTMGEFGLSLPRSPLFGTDGIRGKAGELLTAPLALSLGFWAGQVLREQTDTAGPVIIGQDSRLSSDMLANAMAAGLNSAGVEVWQLGLCPTPCVAYLTRKTAAIGGIMISASHNPPEDNGIKFFDHQGLKLPKSLATAIEAGLRGQNQTSGLNASQWGRSYGQPHRVQYYQDFLLGSLPQPLNFQGLKVVLDLAWGASVNLAPHIFRSLGAEVIALHDLADGSQINVDCGSTHLHRLQRAVRETGADLGFAFDGDADRVMAVDAQGRPVDGDYILFLWGKTLQESNHLPDNLIVGTVMANLAFERAWEKLGGKLIRTAVGDQNVQAQMWETGAMLGGEQSGHIICHHHSYSGDGLQAALHLATLVQKSGLSLSELLSESFQPYPQILRNVRVLDRERRLHWQECAPLQQAIATAEKSMGTTGRILVRASGTEPLIRVMVEAACAETAAHWSDQLTSTVQCHLGDS.

Ser-128 (phosphoserine intermediate) is an active-site residue. Mg(2+) is bound by residues Ser-128, Asp-269, Asp-271, and Asp-273. Residue Ser-128 is modified to Phosphoserine.

The protein belongs to the phosphohexose mutase family. It depends on Mg(2+) as a cofactor. In terms of processing, activated by phosphorylation.

The catalysed reaction is alpha-D-glucosamine 1-phosphate = D-glucosamine 6-phosphate. In terms of biological role, catalyzes the conversion of glucosamine-6-phosphate to glucosamine-1-phosphate. The protein is Phosphoglucosamine mutase of Synechocystis sp. (strain ATCC 27184 / PCC 6803 / Kazusa).